The sequence spans 182 residues: Large ribosomal subunit protein uL5 (182 aa).

Belongs to the universal ribosomal protein uL5 family. As to quaternary structure, part of the 50S ribosomal subunit; part of the 5S rRNA/L5/L18/L25 subcomplex. Contacts the 5S rRNA and the P site tRNA. Forms a bridge to the 30S subunit in the 70S ribosome.

Functionally, this is one of the proteins that bind and probably mediate the attachment of the 5S RNA into the large ribosomal subunit, where it forms part of the central protuberance. In the 70S ribosome it contacts protein S13 of the 30S subunit (bridge B1b), connecting the 2 subunits; this bridge is implicated in subunit movement. Contacts the P site tRNA; the 5S rRNA and some of its associated proteins might help stabilize positioning of ribosome-bound tRNAs. The chain is Large ribosomal subunit protein uL5 from Borreliella burgdorferi (strain ATCC 35210 / DSM 4680 / CIP 102532 / B31) (Borrelia burgdorferi).